Here is a 71-residue protein sequence, read N- to C-terminus: Small integral membrane protein 31 (71 aa).

The chain crosses the membrane as a helical span at residues 8–28; it reads LEVAFILLAFFIFSLFTLASI. Basic residues predominate over residues 48–57; that stretch reads RKRKEFKGKK. Residues 48-71 are disordered; that stretch reads RKRKEFKGKKNCSDEEHKIETMQP. Asn-58 carries an N-linked (GlcNAc...) asparagine glycan. The span at 58–71 shows a compositional bias: basic and acidic residues; sequence NCSDEEHKIETMQP.

It is found in the membrane. In Mus musculus (Mouse), this protein is Small integral membrane protein 31.